Here is a 296-residue protein sequence, read N- to C-terminus: Protoheme IX farnesyltransferase 2 (296 aa).

Transmembrane regions (helical) follow at residues 7–27, 36–56, 83–103, 108–128, 134–154, 163–183, 207–227, 229–249, and 265–285; these read LLVA…GGYF, PMLL…GCVL, LKAA…LLWW, LTTA…SLWF, YGTL…YCAV, ASLL…IAIF, IHIV…CLGG, AGYG…AIAL, and FAFS…DFQV.

This sequence belongs to the UbiA prenyltransferase family. Protoheme IX farnesyltransferase subfamily.

It is found in the cell inner membrane. It carries out the reaction heme b + (2E,6E)-farnesyl diphosphate + H2O = Fe(II)-heme o + diphosphate. It participates in porphyrin-containing compound metabolism; heme O biosynthesis; heme O from protoheme: step 1/1. Its function is as follows. Converts heme B (protoheme IX) to heme O by substitution of the vinyl group on carbon 2 of heme B porphyrin ring with a hydroxyethyl farnesyl side group. The polypeptide is Protoheme IX farnesyltransferase 2 (Pseudomonas aeruginosa (strain UCBPP-PA14)).